A 67-amino-acid polypeptide reads, in one-letter code: Beta-defensin 9 (67 aa).

Residues 1 to 24 (MRTLCSLLLICCLLFSYTTPAANS) form the signal peptide. Cystine bridges form between C34-C62, C41-C55, and C45-C63.

The protein belongs to the beta-defensin family. Weakly expressed in adult and neonatal brain.

The protein resides in the secreted. In terms of biological role, has antibacterial activity. In Mus musculus (Mouse), this protein is Beta-defensin 9 (Defb9).